The chain runs to 154 residues: MSTSLAIVRLDPGLPLPSRAHEGDAGVDLYSAEDVRLEPGRRALVRTGVAVAIPFGMVGLVHPRSGLAARVGLSIVNSPGTIDAGYRGEIKVALINLDPAEPIVVHRGDRIAQLLVQRVELVELVEVSSFDEAGLAGTSRGDGGHGSSGGHASL.

Residues 64–66 (RSG), N77, 81–83 (TID), and K91 each bind substrate.

The protein belongs to the dUTPase family. In terms of assembly, homotrimer. The cofactor is Mg(2+).

The enzyme catalyses dUTP + H2O = dUMP + diphosphate + H(+). Its pathway is pyrimidine metabolism; dUMP biosynthesis; dUMP from dCTP (dUTP route): step 2/2. Functionally, this enzyme is involved in nucleotide metabolism: it produces dUMP, the immediate precursor of thymidine nucleotides and it decreases the intracellular concentration of dUTP so that uracil cannot be incorporated into DNA. This is Deoxyuridine 5'-triphosphate nucleotidohydrolase from Mycobacterium avium (strain 104).